A 300-amino-acid chain; its full sequence is Enoyl-CoA hydratase domain-containing protein 3, mitochondrial (300 aa).

A mitochondrion-targeting transit peptide spans 1 to 66 (MAVVAGLRAF…RNIVLSNPRR (66 aa)). The disordered stretch occupies residues 34–53 (GSAGPAGSESEPRLTSTRQQ). Lys-110 carries the N6-succinyllysine modification.

It belongs to the enoyl-CoA hydratase/isomerase family.

The protein localises to the mitochondrion. Its function is as follows. May play a role in fatty acid biosynthesis and insulin sensitivity. This is Enoyl-CoA hydratase domain-containing protein 3, mitochondrial from Mus musculus (Mouse).